The sequence spans 351 residues: Inositol monophosphatase 3 (351 aa).

Residues 11-31 (LGIGVFCLLALGVLYHVYSGF) traverse the membrane as a helical segment. Residues glutamate 121, aspartate 162, leucine 164, aspartate 165, and aspartate 288 each coordinate Mg(2+). Substrate is bound at residue glutamate 121. Residues 164 to 167 (LDAT) and aspartate 288 each bind substrate.

Belongs to the inositol monophosphatase superfamily. It depends on Mg(2+) as a cofactor.

The protein resides in the membrane. It catalyses the reaction a myo-inositol phosphate + H2O = myo-inositol + phosphate. It functions in the pathway polyol metabolism; myo-inositol biosynthesis; myo-inositol from D-glucose 6-phosphate: step 2/2. The sequence is that of Inositol monophosphatase 3 (bpnt2) from Xenopus laevis (African clawed frog).